The following is a 325-amino-acid chain: Large ribosomal subunit protein uL1m (325 aa).

The N-terminal 50 residues, Met1–Ala50, are a transit peptide targeting the mitochondrion.

The protein belongs to the universal ribosomal protein uL1 family. In terms of assembly, component of the mitochondrial large ribosomal subunit (mt-LSU). Mature mammalian 55S mitochondrial ribosomes consist of a small (28S) and a large (39S) subunit. The 28S small subunit contains a 12S ribosomal RNA (12S mt-rRNA) and 30 different proteins. The 39S large subunit contains a 16S rRNA (16S mt-rRNA), a copy of mitochondrial valine transfer RNA (mt-tRNA(Val)), which plays an integral structural role, and 52 different proteins.

Its subcellular location is the mitochondrion. The polypeptide is Large ribosomal subunit protein uL1m (MRPL1) (Homo sapiens (Human)).